Reading from the N-terminus, the 730-residue chain is Synaptotagmin-like protein 5 (730 aa).

In terms of domain architecture, RabBD spans 7–123; sequence FINLSFLLDH…IITGEWFFEE (117 aa). The segment at 64–106 adopts an FYVE-type zinc-finger fold; the sequence is CVHCHRNLGLIFDRGDPCQACSLRVCRECRVAGPNGSWKCTVC. Phosphoserine is present on Ser147. Disordered stretches follow at residues 147–188, 217–271, and 294–355; these read SPGA…GFLL, QHFR…TRTV, and SQEL…LDKD. 2 stretches are compositionally biased toward polar residues: residues 248-271 and 305-322; these read PKSSRSNGVTPGTQSSPAPSTRTV and TSGTPSIAVSGTSLSSDQ. C2 domains lie at 406-527 and 563-694; these read VSGE…DEWF and PPEQ…VDWM.

Binds RAB27A that has been activated by GTP-binding, and possibly also RAB3A and RAB6A. As to expression, highly expressed in placenta and liver.

The protein resides in the membrane. In terms of biological role, may act as Rab effector protein and play a role in vesicle trafficking. Binds phospholipids. The chain is Synaptotagmin-like protein 5 (SYTL5) from Homo sapiens (Human).